Reading from the N-terminus, the 142-residue chain is 3-hydroxyacyl-[acyl-carrier-protein] dehydratase FabZ (142 aa).

Histidine 48 is an active-site residue.

Belongs to the thioester dehydratase family. FabZ subfamily.

The protein resides in the cytoplasm. The enzyme catalyses a (3R)-hydroxyacyl-[ACP] = a (2E)-enoyl-[ACP] + H2O. Functionally, involved in unsaturated fatty acids biosynthesis. Catalyzes the dehydration of short chain beta-hydroxyacyl-ACPs and long chain saturated and unsaturated beta-hydroxyacyl-ACPs. The polypeptide is 3-hydroxyacyl-[acyl-carrier-protein] dehydratase FabZ (Anoxybacillus flavithermus (strain DSM 21510 / WK1)).